The sequence spans 92 residues: MARSIKKGPFIEKSLYQKVLASSGKEKRVVIKTYSRASTIIPEMVSLTISVYNGKSFIPVYITEDLVGHKLGEFSPTRIFRGHAKSDKKGRK.

It belongs to the universal ribosomal protein uS19 family.

In terms of biological role, protein S19 forms a complex with S13 that binds strongly to the 16S ribosomal RNA. The sequence is that of Small ribosomal subunit protein uS19 from Borrelia recurrentis (strain A1).